A 354-amino-acid polypeptide reads, in one-letter code: Peptide chain release factor 1 (354 aa).

Position 230 is an N5-methylglutamine (Gln230). The interval 282-301 (KQASDAIKKQMIGSGDRSER) is disordered.

Belongs to the prokaryotic/mitochondrial release factor family. Methylated by PrmC. Methylation increases the termination efficiency of RF1.

The protein resides in the cytoplasm. Peptide chain release factor 1 directs the termination of translation in response to the peptide chain termination codons UAG and UAA. In Leptospira borgpetersenii serovar Hardjo-bovis (strain L550), this protein is Peptide chain release factor 1.